The primary structure comprises 695 residues: NADPH--cytochrome P450 reductase (695 aa).

The Lumenal segment spans residues 1–8; sequence MAQLDTLD. A helical transmembrane segment spans residues 9 to 31; the sequence is LVVLVALLVGSVAYFTKGTYWAV. The Cytoplasmic segment spans residues 32–695; sequence AKDPYASSGP…SGSYQEDVWS (664 aa). Residues 66–221 form the Flavodoxin-like domain; that stretch reads CVIFYGSQTG…DFLAWKEPMW (156 aa). FMN contacts are provided by residues 72–77, 123–126, 169–178, and Asp204; these read SQTGTA, ATYG, and LGNNTYEHYN. The region spanning 277-538 is the FAD-binding FR-type domain; the sequence is HNPFIAPIVE…HVRHSNFKLP (262 aa). Arg296 contacts NADP(+). Residues 451–454, 469–471, and 486–489 each bind FAD; these read RYYS, TAV, and GVTT. NADP(+) is bound by residues Thr552, 614–615, 620–624, and Glu656; these read SR and KVYVQ. Trp694 contributes to the FAD binding site.

It belongs to the NADPH--cytochrome P450 reductase family. This sequence in the N-terminal section; belongs to the flavodoxin family. The protein in the C-terminal section; belongs to the flavoprotein pyridine nucleotide cytochrome reductase family. Requires FAD as cofactor. The cofactor is FMN.

The protein localises to the endoplasmic reticulum membrane. It localises to the mitochondrion outer membrane. The protein resides in the cell membrane. It carries out the reaction 2 oxidized [cytochrome P450] + NADPH = 2 reduced [cytochrome P450] + NADP(+) + H(+). This enzyme is required for electron transfer from NADP to cytochrome P450 in microsomes. It can also provide electron transfer to heme oxygenase and cytochrome B5. Involved in ergosterol biosynthesis. The protein is NADPH--cytochrome P450 reductase of Aspergillus oryzae (strain ATCC 42149 / RIB 40) (Yellow koji mold).